The sequence spans 263 residues: Tryptophan synthase alpha chain (263 aa).

Catalysis depends on proton acceptor residues E41 and D52.

It belongs to the TrpA family. In terms of assembly, tetramer of two alpha and two beta chains.

It carries out the reaction (1S,2R)-1-C-(indol-3-yl)glycerol 3-phosphate + L-serine = D-glyceraldehyde 3-phosphate + L-tryptophan + H2O. Its pathway is amino-acid biosynthesis; L-tryptophan biosynthesis; L-tryptophan from chorismate: step 5/5. Its function is as follows. The alpha subunit is responsible for the aldol cleavage of indoleglycerol phosphate to indole and glyceraldehyde 3-phosphate. The chain is Tryptophan synthase alpha chain from Geobacillus sp. (strain WCH70).